The primary structure comprises 51 residues: Putative antitoxin VapB6 (51 aa).

Functionally, antitoxin component of a possible type II toxin-antitoxin (TA) system. The cognate toxin is VapC6. The protein is Putative antitoxin VapB6 (vapB6) of Mycobacterium tuberculosis (strain CDC 1551 / Oshkosh).